The chain runs to 770 residues: Amyloid-beta precursor protein (770 aa).

A signal peptide spans 1–17; it reads MLPGLALVLLAAWTARA. Over 18 to 701 the chain is Extracellular; that stretch reads LEVPTDGNAG…AEDVGSNKGA (684 aa). The interval 28–123 is GFLD subdomain; the sequence is LLAEPQVAMF…PYRCLVGEFV (96 aa). Residues 28 to 189 enclose the E1 domain; sequence LLAEPQVAMF…RGVEFVCCPL (162 aa). Disulfide bonds link Cys38–Cys62, Cys73–Cys117, Cys98–Cys105, Cys133–Cys187, Cys144–Cys174, and Cys158–Cys186. 96 to 110 provides a ligand contact to heparin; sequence NWCKRSRKQCKTHTH. A cuBD subdomain region spans residues 131–189; that stretch reads DKCKFLHQERMDVCETHLHWHTVAKETCSEKSTNLHDYGMLLPCGIDKFRGVEFVCCPL. Positions 135–155 are copper-binding; sequence FLHQERMDVCETHLHWHTVAK. 3 residues coordinate Cu(2+): His147, His151, and Tyr168. Residues 181–188 form a zinc-binding region; that stretch reads GVEFVCCP. Residues Glu183, Cys186, and Cys187 each coordinate Zn(2+). The span at 196–207 shows a compositional bias: acidic residues; that stretch reads IDSADAEEDDSD. The segment at 196 to 284 is disordered; that stretch reads IDSADAEEDD…TTTTTTESVE (89 aa). A Phosphoserine; by CK2 modification is found at Ser198. A Phosphoserine; by CK1 modification is found at Ser206. Sulfotyrosine is present on residues Tyr217 and Tyr262. Over residues 228-264 the composition is skewed to acidic residues; it reads VAEEEEVADVEEEEAEDDEDDEDGDEVEEEAEEPYEE. The span at 268–281 shows a compositional bias: low complexity; it reads RTTSIATTTTTTTE. Disulfide bonds link Cys291/Cys341, Cys300/Cys324, and Cys316/Cys337. The 51-residue stretch at 291–341 folds into the BPTI/Kunitz inhibitor domain; it reads CSEQAETGPCRAMISRWYFDVTEGKCAPFFYGGCGGNRNNFDTEEYCMAVC. Sulfotyrosine is present on Tyr336. Positions 344–365 match the OX-2 motif; that stretch reads VMSQSLLKTTQEHLPQDPVKLP. An E2 domain is found at 374 to 565; the sequence is AVDKYLETPG…EEIQDEVDEL (192 aa). Residues 391–423 are heparin-binding; that stretch reads FQKAKERLEAKHRERMSQVMREWEEAERQAKNL. Ser441 carries the phosphoserine modification. Residues 491-522 form a heparin-binding region; it reads FNMLKKYVRAEQKDRQHTLKHFEHVRMVDPKK. The residue at position 497 (Tyr497) is a Phosphotyrosine. The segment at 523–540 is collagen-binding; sequence AAQIRSQVMTHLRVIYER. Residues Asn542 and Asn571 are each glycosylated (N-linked (GlcNAc...) asparagine). Residues His677, Tyr681, His684, and His685 each coordinate Cu(2+). Positions 677, 681, 684, and 685 each coordinate Zn(2+). The interaction with PSEN1 stretch occupies residues 695–722; it reads VGSNKGAIIGLMVGGVVIATVIVITLVM. A helical membrane pass occupies residues 702 to 722; the sequence is IIGLMVGGVVIATVIVITLVM. At 723-770 the chain is on the cytoplasmic side; it reads LKKKQYTSIHHGVVEVDAAVTPEERHLSKMQQNGYENPTYKFFEQMQN. A Basolateral sorting signal motif is present at residues 724-734; the sequence is KKKQYTSIHHG. A Phosphothreonine modification is found at Thr729. Ser730 carries the phosphoserine; by APP-kinase I modification. An interaction with G(o)-alpha region spans residues 732–751; sequence HHGVVEVDAAVTPEERHLSK. Residue Thr743 is modified to Phosphothreonine; by CDK5 and MAPK10. Positions 756 to 770 are required for the interaction with KIF5B and for anterograde transport in axons; it reads GYENPTYKFFEQMQN. At Tyr757 the chain carries Phosphotyrosine; by ABL1. A YENPXY motif; contains endocytosis signal motif is present at residues 757–762; sequence YENPTY. Lys763 is covalently cross-linked (Glycyl lysine isopeptide (Lys-Gly) (interchain with G-Cter in ubiquitin)).

The protein belongs to the APP family. Binds, via its C-terminus, to the PID domain of several cytoplasmic proteins, including APBB family members, the APBA family, MAPK8IP1, SHC1 and NUMB and DAB1. Binding to DAB1 inhibits its serine phosphorylation. Interacts (via NPXY motif) with DAB2 (via PID domain); the interaction is impaired by tyrosine phosphorylation of the NPXY motif. Also interacts with GPCR-like protein BPP, APPBP1, IB1, KNS2 (via its TPR domains), APPBP2 (via BaSS) and DDB1. In vitro, it binds MAPT via the MT-binding domains. Associates with microtubules in the presence of ATP and in a kinesin-dependent manner. Interacts, through a C-terminal domain, with GNAO1. Amyloid-beta protein 42 binds CHRNA7 in hippocampal neurons. Amyloid-beta associates with HADH2. Interacts with CPEB1, ANKS1B and AGER. Interacts with ITM2B. Interacts with ITM2C. Interacts with IDE. Can form homodimers; dimerization is enhanced in the presence of Cu(2+) ions. Can form homodimers; this is promoted by heparin binding. Amyloid-beta protein 40 interacts with S100A9. CTF-alpha product of APP interacts with GSAP. Interacts with SORL1 (via N-terminal ectodomain); this interaction retains APP in the trans-Golgi network and reduces processing into soluble APP-alpha and amyloid-beta peptides. The C99 fragment also interacts with SORL1. Interacts with PLD3. Interacts with VDAC1. Interacts with NSG1; could regulate APP processing. Amyloid-beta protein 42 interacts with FPR2. Interacts (via transmembrane region) with PSEN1; the interaction is direct. Interacts with LRRK2. Interacts (via cytoplasmic domain) with KIF5B. Interacts (via C-terminus) with APBB2/FE65L1 (via C-terminus). Interacts (via intracellular domain) with APBB3. Post-translationally, proteolytically processed under normal cellular conditions. Cleavage either by alpha-secretase, beta-secretase or theta-secretase leads to generation and extracellular release of soluble APP peptides, S-APP-alpha and S-APP-beta, and the retention of corresponding membrane-anchored C-terminal fragments, C80, C83 and C99. Subsequent processing of C80 and C83 by gamma-secretase yields P3 peptides. This is the major secretory pathway and is non-amyloidogenic. Alternatively, presenilin/nicastrin-mediated gamma-secretase processing of C99 releases the amyloid-beta proteins, amyloid-beta protein 40 and amyloid-beta protein 42, major components of amyloid plaques, and the cytotoxic C-terminal fragments, gamma-CTF(50), gamma-CTF(57) and gamma-CTF(59). PSEN1 cleavage is more efficient with C83 than with C99 as substrate (in vitro). Amyloid-beta protein 40 and Amyloid-beta protein 42 are cleaved by ACE. Many other minor amyloid-beta peptides, amyloid-beta 1-X peptides, are found in cerebral spinal fluid (CSF) including the amyloid-beta X-15 peptides, produced from the cleavage by alpha-secretase. Proteolytically cleaved by caspases during neuronal apoptosis. Cleavage at Asp-739 by either caspase-3, -8 or -9 results in the production of the neurotoxic C31 peptide and the increased production of amyloid-beta peptides. In terms of processing, N- and O-glycosylated. Post-translationally, phosphorylation in the C-terminal on tyrosine, threonine and serine residues is neuron-specific. Phosphorylation can affect APP processing, neuronal differentiation and interaction with other proteins. Phosphorylated on Thr-743 in neuronal cells by Cdc5 kinase and Mapk10, in dividing cells by Cdc2 kinase in a cell-cycle dependent manner with maximal levels at the G2/M phase and, in vitro, by GSK-3-beta. The Thr-743 phosphorylated form causes a conformational change which reduces binding of Fe65 family members. In dopaminergic (DA) neurons, phosphorylation on Thr-743 by LRKK2 promotes the production and the nuclear translocation of the APP intracellular domain (AICD) which induces DA neuron apoptosis. Phosphorylation on Tyr-757 is required for SHC binding. Phosphorylated in the extracellular domain by casein kinases on both soluble and membrane-bound APP. This phosphorylation is inhibited by heparin. Extracellular binding and reduction of copper, results in a corresponding oxidation of Cys-144 and Cys-158, and the formation of a disulfide bond. In terms of processing, trophic-factor deprivation triggers the cleavage of surface APP by beta-secretase to release sAPP-beta which is further cleaved to release an N-terminal fragment of APP (N-APP). Post-translationally, amyloid-beta peptides are degraded by IDE. Sulfated on tyrosine residues.

It localises to the cell membrane. It is found in the membrane. The protein resides in the perikaryon. Its subcellular location is the cell projection. The protein localises to the growth cone. It localises to the clathrin-coated pit. It is found in the early endosome. The protein resides in the cytoplasmic vesicle. Its subcellular location is the endoplasmic reticulum. The protein localises to the golgi apparatus. It localises to the secreted. It is found in the cell surface. The protein resides in the nucleus. Its subcellular location is the cytoplasm. Its function is as follows. Functions as a cell surface receptor and performs physiological functions on the surface of neurons relevant to neurite growth, neuronal adhesion and axonogenesis. Interaction between APP molecules on neighboring cells promotes synaptogenesis. Involved in cell mobility and transcription regulation through protein-protein interactions. Can promote transcription activation through binding to APBB1-KAT5 and inhibit Notch signaling through interaction with Numb. Couples to apoptosis-inducing pathways such as those mediated by G(o) and JIP. Inhibits G(o)-alpha ATPase activity. Acts as a kinesin I membrane receptor, mediating the axonal transport of beta-secretase and presenilin 1. By acting as a kinesin I membrane receptor, plays a role in axonal anterograde transport of cargo towards synapses in axons. May be involved in copper homeostasis/oxidative stress through copper ion reduction. In vitro, copper-metallated APP induces neuronal death directly or is potentiated through Cu(2+)-mediated low-density lipoprotein oxidation. Can regulate neurite outgrowth through binding to components of the extracellular matrix such as heparin and collagen I and IV. Induces a AGER-dependent pathway that involves activation of p38 MAPK, resulting in internalization of amyloid-beta peptide and mitochondrial dysfunction in cultured cortical neurons. Provides Cu(2+) ions for GPC1 which are required for release of nitric oxide (NO) and subsequent degradation of the heparan sulfate chains on GPC1. In terms of biological role, amyloid-beta peptides are lipophilic metal chelators with metal-reducing activity. Binds transient metals such as copper, zinc and iron. The gamma-CTF peptides as well as the caspase-cleaved peptides, including C31, are potent enhancers of neuronal apoptosis. The chain is Amyloid-beta precursor protein from Sus scrofa (Pig).